The chain runs to 464 residues: Tyrosine aminotransferase (464 aa).

N6-(pyridoxal phosphate)lysine is present on Lys284.

The protein belongs to the class-I pyridoxal-phosphate-dependent aminotransferase family. In terms of assembly, homodimer. It depends on pyridoxal 5'-phosphate as a cofactor. As to expression, expressed in the muscle. Expressed in the hypodermis and intestine.

It catalyses the reaction L-tyrosine + 2-oxoglutarate = 3-(4-hydroxyphenyl)pyruvate + L-glutamate. It carries out the reaction 3-hydroxy-L-phenylalanine + 2-oxoglutarate = 3-(3-hydroxyphenyl)pyruvate + L-glutamate. Its pathway is amino-acid degradation; L-phenylalanine degradation; acetoacetate and fumarate from L-phenylalanine: step 2/6. Transaminase involved in tyrosine breakdown. Converts tyrosine to p-hydroxyphenylpyruvate. Has no transaminase activity towards phenylalanine. Plays protective role against oxidative stress, metabolizing meta-tyrosine and negatively regulating its accumulation. Plays a role in modulating the daf-2/insulin receptor-like transduction pathway through regulating tyrosine levels. Negatively regulates dauer formation. Plays a role in longevity. This is Tyrosine aminotransferase from Caenorhabditis elegans.